The chain runs to 444 residues: Elongation factor 1-alpha (444 aa).

A tr-type G domain is found at 15 to 236 (KPHLNLAVIG…ALDTFQPPPR (222 aa)). A G1 region spans residues 24–31 (GHVDNGKS). 24-31 (GHVDNGKS) contacts GTP. Ser31 provides a ligand contact to Mg(2+). Residues 80 to 84 (GVTIE) form a G2 region. The interval 101–104 (DLPG) is G3. GTP is bound by residues 101–105 (DLPGH) and 163–166 (NKMD). The tract at residues 163 to 166 (NKMD) is G4. The segment at 202 to 204 (SAI) is G5.

It belongs to the TRAFAC class translation factor GTPase superfamily. Classic translation factor GTPase family. EF-Tu/EF-1A subfamily.

The protein localises to the cytoplasm. The catalysed reaction is GTP + H2O = GDP + phosphate + H(+). In terms of biological role, GTP hydrolase that promotes the GTP-dependent binding of aminoacyl-tRNA to the A-site of ribosomes during protein biosynthesis. This chain is Elongation factor 1-alpha, found in Pyrobaculum islandicum (strain DSM 4184 / JCM 9189 / GEO3).